The chain runs to 184 residues: GTP-binding protein Rheb (184 aa).

Residue lysine 8 forms a Glycyl lysine isopeptide (Lys-Gly) (interchain with G-Cter in ubiquitin) linkage. Residues serine 16, valine 17, glycine 18, lysine 19, serine 20, serine 21, valine 32, and aspartate 33 each coordinate GDP. Serine 16 is a binding site for GTP. GTP contacts are provided by glycine 18, lysine 19, serine 20, serine 21, and valine 32. Mg(2+) is bound at residue serine 20. Tyrosine 35, threonine 38, asparagine 119, and aspartate 122 together coordinate GTP. The Effector region motif lies at 35–43 (YDPTIENTF). Threonine 38 is a Mg(2+) binding site. The GDP site is built by asparagine 119 and aspartate 122. Serine 130 bears the Phosphoserine; by MAPKAPK5 mark. Alanine 150 provides a ligand contact to GDP. Alanine 150 lines the GTP pocket. The residue at position 181 (cysteine 181) is a Cysteine methyl ester. Cysteine 181 carries S-farnesyl cysteine lipidation. The propeptide at 182–184 (SVM) is removed in mature form.

The protein belongs to the small GTPase superfamily. Rheb family. As to quaternary structure, associates with the mTORC1 complex (MTOR, MLST8 and RPTOR) in a guanyl nucleotide-independent manner. Interacts with TSC2. Interacts with MCRS1; the interaction maintains RHEB at the lysosome in its active GTP-bound form and prevents its interaction with the mTORC1 complex inhibitor TSC2, ensuring activation of the mTORC1 complex by RHEB. Interacts (when prenylated) with PDE6D; this promotes release from membranes. In terms of processing, farnesylation is important for efficiently activating mTORC1-mediated signaling. Post-translationally, polyubiquitinated in response to amino acid, promoting its interaction with MTOR and mTORC1 activation. Deubiquitination by ATXN3 promotes recruitment of the TSC-TBC complex and RHEB inactivation by TSC2. Monoubiquitinated at Lys-8 by RNF152, promoting its association with the TSC-TBC complex. Deubiquitinated at Lys-8 by USP4, promoting mTORC1 activation. Phosphorylation by MAPKAPK5 impairs GTP-binding and inactivation. Ubiquitous. Highest levels observed in skeletal and cardiac muscle.

The protein localises to the endomembrane system. It is found in the lysosome membrane. It localises to the golgi apparatus membrane. Its subcellular location is the endoplasmic reticulum membrane. The protein resides in the cytoplasm. The protein localises to the cytosol. It catalyses the reaction GTP + H2O = GDP + phosphate + H(+). With respect to regulation, alternates between an inactive form bound to GDP and an active form bound to GTP. Inactivated by the TSC-TBC complex via the GTPase activating protein (GAP) domain of TSC2. Autoinhibited by Tyr-35, which constrains the active site conformation, restricting the access of the catalytic Asp-65 to the nucleotide-binding pocket. Specifically inhibited by NR1 (4-bromo-6-(3,4-dichlorophenylthio)-1-(4-(dimethylcarbamoyl)benzyl)-1H-indole-2-carboxylic acid). Small GTPase that acts as an allosteric activator of the canonical mTORC1 complex, an evolutionarily conserved central nutrient sensor that stimulates anabolic reactions and macromolecule biosynthesis to promote cellular biomass generation and growth. In response to nutrients, growth factors or amino acids, specifically activates the protein kinase activity of MTOR, the catalytic component of the mTORC1 complex: acts by causing a conformational change that allows the alignment of residues in the active site of MTOR, thereby enhancing the phosphorylation of ribosomal protein S6 kinase (RPS6KB1 and RPS6KB2) and EIF4EBP1 (4E-BP1). RHEB is also required for localization of the TSC-TBC complex to lysosomal membranes. In response to starvation, RHEB is inactivated by the TSC-TBC complex, preventing activation of mTORC1. Has low intrinsic GTPase activity. This chain is GTP-binding protein Rheb, found in Homo sapiens (Human).